We begin with the raw amino-acid sequence, 130 residues long: Small ribosomal subunit protein uS11c (130 aa).

This sequence belongs to the universal ribosomal protein uS11 family. Part of the 30S ribosomal subunit.

Its subcellular location is the plastid. It is found in the chloroplast. This is Small ribosomal subunit protein uS11c from Guillardia theta (Cryptophyte).